Consider the following 480-residue polypeptide: Cytochrome P450 monooxygenase ORF11 (480 aa).

A helical membrane pass occupies residues 9–29; sequence LLLLPHLSALTPKTGFLIGLA. Residues Asn265 and Asn352 are each glycosylated (N-linked (GlcNAc...) asparagine). Cys449 lines the heme pocket.

This sequence belongs to the cytochrome P450 family. The cofactor is heme.

It is found in the membrane. The protein operates within sesquiterpene biosynthesis. Cytochrome P450 monooxygenase; part of the gene cluster that mediates the biosynthesis of PR-toxin, a bicyclic sesquiterpene belonging to the eremophilane class and acting as a mycotoxin. The first step of the pathway is catalyzed by the aristolochene synthase which performs the cyclization of trans,trans-farnesyl diphosphate (FPP) to the bicyclic sesquiterpene aristolochene. Following the formation of aristolochene, the non-oxygenated aristolochene is converted to the trioxygenated intermediate eremofortin B, via 7-epi-neopetasone. This conversion appears to involve three enzymes, a hydroxysterol oxidase-like enzyme, the quinone-oxidase prx3 that forms the quinone-type-structure in the bicyclic nucleus of aristolochene with the C8-oxo group and the C-3 hydroxyl group, and the P450 monooxygenase ORF6 that introduces the epoxide at the double bond between carbons 1 and 2. No monoxy or dioxy-intermediates have been reported to be released to the broth, so these three early oxidative reactions may be coupled together. Eremofortin B is further oxidized by another P450 monooxygenase, that introduces a second epoxide between carbons 7 and 11 prior to acetylation to eremofortin A by the acetyltransferase ORF8. The second epoxidation may be performed by a second P450 monooxygenase. After the acetylation step, eremofortin A is converted to eremofortin C and then to PR-toxin. First the conversion of eremofortin A to eremofortin C proceeds by oxidation of the side chain of the molecule at C-12 and is catalyzed by the short-chain oxidoreductase prx1. The cytochrome P450 monooxygenase ORF6 is probably also involved in this step. The primary alcohol formed at C-12 is finally oxidized by the short-chain alcohol dehydrogenase prx4 that forms PR-toxin. In Penicillium roqueforti (strain FM164), this protein is Cytochrome P450 monooxygenase ORF11.